We begin with the raw amino-acid sequence, 334 residues long: Phenylalanine--tRNA ligase alpha subunit (334 aa).

Glu249 serves as a coordination point for Mg(2+).

The protein belongs to the class-II aminoacyl-tRNA synthetase family. Phe-tRNA synthetase alpha subunit type 1 subfamily. As to quaternary structure, tetramer of two alpha and two beta subunits. Mg(2+) is required as a cofactor.

It localises to the cytoplasm. It catalyses the reaction tRNA(Phe) + L-phenylalanine + ATP = L-phenylalanyl-tRNA(Phe) + AMP + diphosphate + H(+). The polypeptide is Phenylalanine--tRNA ligase alpha subunit (Desulfatibacillum aliphaticivorans).